We begin with the raw amino-acid sequence, 164 residues long: Thiol peroxidase (164 aa).

The Thioredoxin domain occupies 18–164 (KKVGDSAPDF…YEAVLSHLNK (147 aa)). The Cysteine sulfenic acid (-SOH) intermediate role is filled by Cys-60. Cys-60 and Cys-94 are oxidised to a cystine.

Belongs to the peroxiredoxin family. Tpx subfamily. Homodimer.

The catalysed reaction is a hydroperoxide + [thioredoxin]-dithiol = an alcohol + [thioredoxin]-disulfide + H2O. Thiol-specific peroxidase that catalyzes the reduction of hydrogen peroxide and organic hydroperoxides to water and alcohols, respectively. Plays a role in cell protection against oxidative stress by detoxifying peroxides. In Oceanobacillus iheyensis (strain DSM 14371 / CIP 107618 / JCM 11309 / KCTC 3954 / HTE831), this protein is Thiol peroxidase.